A 350-amino-acid chain; its full sequence is Cell division protein ZipA (350 aa).

At 1 to 6 the chain is on the periplasmic side; sequence MEDLQL. The helical transmembrane segment at 7–27 threads the bilayer; it reads VLFVLGAIAIVAVLVHGFWSI. Topologically, residues 28–350 are cytoplasmic; it reads RKQQPRTIKE…QYLARIRANA (323 aa). Disordered stretches follow at residues 36–55, 65–136, and 187–213; these read KEQPRTPYAMSPGRRDAEGF, VRKL…PSAR, and RVPADQGQAAHSAATQAEPQAKAEEPL. 2 stretches are compositionally biased toward basic and acidic residues: residues 65–109 and 116–131; these read VRKL…ESRA and AAHERRGHDFRHHEEP.

Belongs to the ZipA family. Interacts with FtsZ via their C-terminal domains.

It is found in the cell inner membrane. Essential cell division protein that stabilizes the FtsZ protofilaments by cross-linking them and that serves as a cytoplasmic membrane anchor for the Z ring. Also required for the recruitment to the septal ring of downstream cell division proteins. The polypeptide is Cell division protein ZipA (Shewanella amazonensis (strain ATCC BAA-1098 / SB2B)).